The primary structure comprises 155 residues: Transcriptional repressor NrdR (155 aa).

The segment at 3-34 is a zinc-finger region; the sequence is CPKCDHNGTRVLDSRPVQDHYSIRRRRECEKC. The ATP-cone domain occupies 49–139; that stretch reads LIIVKKDGNR…VYRQFKDITV (91 aa).

The protein belongs to the NrdR family. It depends on Zn(2+) as a cofactor.

Negatively regulates transcription of bacterial ribonucleotide reductase nrd genes and operons by binding to NrdR-boxes. The protein is Transcriptional repressor NrdR of Exiguobacterium sp. (strain ATCC BAA-1283 / AT1b).